The following is a 433-amino-acid chain: Glutamate-1-semialdehyde 2,1-aminomutase (433 aa).

Lys-265 is modified (N6-(pyridoxal phosphate)lysine).

The protein belongs to the class-III pyridoxal-phosphate-dependent aminotransferase family. HemL subfamily. Homodimer. Requires pyridoxal 5'-phosphate as cofactor.

It localises to the cytoplasm. It carries out the reaction (S)-4-amino-5-oxopentanoate = 5-aminolevulinate. It participates in porphyrin-containing compound metabolism; protoporphyrin-IX biosynthesis; 5-aminolevulinate from L-glutamyl-tRNA(Glu): step 2/2. This is Glutamate-1-semialdehyde 2,1-aminomutase from Shewanella denitrificans (strain OS217 / ATCC BAA-1090 / DSM 15013).